A 123-amino-acid chain; its full sequence is MQNKIQVKSVEKRENALIFCAENSEIEVKGLSARNHVLVDSDNLSFLYILENESSFIYVSIPHTCWEAMHEAMNNDVVMFVRVNDIEMELEGLKEEVEYLVENIEGNANYGEELVTAVEKVFL.

It belongs to the UPF0738 family.

The chain is UPF0738 protein BALH_1059 from Bacillus thuringiensis (strain Al Hakam).